Reading from the N-terminus, the 82-residue chain is Small ribosomal subunit protein uS17 (82 aa).

The protein belongs to the universal ribosomal protein uS17 family. As to quaternary structure, part of the 30S ribosomal subunit.

In terms of biological role, one of the primary rRNA binding proteins, it binds specifically to the 5'-end of 16S ribosomal RNA. In Bradyrhizobium diazoefficiens (strain JCM 10833 / BCRC 13528 / IAM 13628 / NBRC 14792 / USDA 110), this protein is Small ribosomal subunit protein uS17.